We begin with the raw amino-acid sequence, 485 residues long: Calcium-dependent protein kinase 27 (485 aa).

The N-myristoyl glycine moiety is linked to residue Gly-2. Residues 28–290 (YILGEELGRG…AAEVLGHPWM (263 aa)) enclose the Protein kinase domain. ATP-binding positions include 34-42 (LGRGNFGLT) and Lys-57. The active-site Proton acceptor is the Asp-156. Residue Ser-196 is modified to Phosphoserine. Residues 295 to 325 (ASDKPIDGVVLSRLKRFRDANKFKKVVLKFI) are autoinhibitory domain. 4 EF-hand domains span residues 332-367 (EEIK…LGSN), 368-403 (LSKT…RYKL), 404-439 (DRDE…DGAG), and 444-474 (IKQI…ESSL). Asp-345, Asp-347, Ser-349, Asn-351, Glu-356, Asp-381, Asp-383, Asn-385, Thr-387, Glu-392, Asp-417, Asp-419, Asp-421, His-423, Glu-428, Asp-452, Asp-454, Asp-456, Lys-458, and Glu-463 together coordinate Ca(2+).

This sequence belongs to the protein kinase superfamily. Ser/Thr protein kinase family. CDPK subfamily.

Its subcellular location is the membrane. The catalysed reaction is L-seryl-[protein] + ATP = O-phospho-L-seryl-[protein] + ADP + H(+). It carries out the reaction L-threonyl-[protein] + ATP = O-phospho-L-threonyl-[protein] + ADP + H(+). Its activity is regulated as follows. Activated by calcium. Autophosphorylation may play an important role in the regulation of the kinase activity. May play a role in signal transduction pathways that involve calcium as a second messenger. In Arabidopsis thaliana (Mouse-ear cress), this protein is Calcium-dependent protein kinase 27 (CPK27).